A 1240-amino-acid chain; its full sequence is MNRAREELDRYRETLEEVSSRFVDVATKARQRREDPKPEPEVMLATSIGERVEGLLQVENVADRLEELEEELGDREEATFRIVEEVIKGELKVKGDLPLHKRIDYAVRIGLAVLTEAVVSAPLEGIAAVEIRERGTGHRVVDESEPPHEEPKLVCTECGKEVDPENCYLAVKYAGPIRAAGGTAAALSALLADYARQVAGLPRFNPDDFDHDLVGRYVEEVVTYLDKVGSFQYNPSEEEVELVAKNIPIEIDGEPTEEVEVQGHRDIPHLPNQLRGGALLVICEGICQKAPKLIKRVEKYGIDGWEFLEKLVNKGSDDEEEGEEEKTKIKPNDKYMGELVAGRPLLSHPSAKGGFRLRYGRARNTGFAAVGVHPSLMYVTKGFIVIGTQLKVERPGKAACVLPVTEIEPPVVKLRDGSVVRLDDPREAKELVEKDEIEEILDLGEMLVAVGEFIENNHPLVPPAYCPEWWVKEVPDVVKVIGLRKNLPNDVFEKLKDVPLKRLVKEASRLSGNGNNLDGFLNGPVKVARSIVELVRKEVIPRLSSPERMSVEEAIELSREYGVPFHPKYTFLWHDVKPKDVDELREALEVAGSEWGNLRVEFENDGEIKRILEDLLVPHRLEDDTIVVEEPWASALLAQLGYDPESGEFREQDEDLDYLLDYLVIRDETCRYVSKLAGFPIREKAPTRIGARMGRPEKARERKMSPPPHVLFPIGIAGGNQRDIMKFHRGESEDTDRVEVCYRICPECDRLVPYRVCPFCGTETVQYCNRCDEPADECDCEEPDPVVRADIERNDDPYSSLPVRELVRRAEEEVGTTDTLKGVKGMTSRLKMPEPLQKGILRAKRDLFVFKDGTLRFDCNDCPLTHVRLKEVGLTPFKARLLGFERDINGDPVVSEDQVVELYPQDVVLPRKAAEWAVRVCQYLDDLLRKYYGLEPVYGVEKPEDLIGHLIVTLAPHTSCGVVGRVVGIADINCWYNHPIINAARRRNCDGDEDAFMLLLDVLLNFSRLYLPDKRGGLMDAPLVLTAVVDPYEIDDEVWNMDVCGDYPLELYRKALEYADAGEAEELIERLEDRLDLPRGLQFTHDTEAIDLGPTVTRYSRLEKMEEKLEEQLDLARRIRAVDESDVAKIVLDSHFLPDIKGNLRKFGRQKFRCSRCNAKFNVPPLSGKCPRCGGDVLLTIYPATATKYLEPAKRLVEEFGTHDEEWRTIASEVELLEEEAKTLFGSDHSVSLKKFFGET.

This sequence belongs to the archaeal DNA polymerase II family. In terms of assembly, heterodimer of a large subunit and a small subunit.

It catalyses the reaction DNA(n) + a 2'-deoxyribonucleoside 5'-triphosphate = DNA(n+1) + diphosphate. The enzyme catalyses Exonucleolytic cleavage in the 3'- to 5'-direction to yield nucleoside 5'-phosphates.. In terms of biological role, possesses two activities: a DNA synthesis (polymerase) and an exonucleolytic activity that degrades single-stranded DNA in the 3'- to 5'-direction. Has a template-primer preference which is characteristic of a replicative DNA polymerase. This chain is DNA polymerase II large subunit, found in Methanopyrus kandleri (strain AV19 / DSM 6324 / JCM 9639 / NBRC 100938).